A 217-amino-acid polypeptide reads, in one-letter code: Protein 33K (217 aa).

The tract at residues 1–142 (MPPKGNKQAI…KEKTSAIATR (142 aa)) is disordered. Residues 24 to 68 (QWDEEEESWDDSQAEEVSDEEEMESWESLDEELEDKPPKDEEEEI) show a composition bias toward acidic residues. The segment covering 69–78 (IASAAAPSSK) has biased composition (low complexity). The segment covering 123 to 136 (KRSEKTTRPRKEKT) has biased composition (basic and acidic residues). Residues 160–187 (YAIFQQSRGQQLELKVKNRSLRSLTRSC) are necessary for nuclear subcellular location. Residues 166–186 (SRGQQLELKVKNRSLRSLTRS) form an RS-repeat; required for splicing enhancer activity region.

It belongs to the adenoviridae splicing factor family. As to quaternary structure, homooligomer. Interacts with DBP; this interaction occurs at a unique vertex during genome packaging. Interacts with IVa2; this interaction occurs at a unique vertex during genome packaging and seems to potentiate IVa2 and 33K oligomerization. Phosphorylated in vitro by human PKA and PRKDC. PRKDC inhibits, whereas PKA activates the splicing factor.

It is found in the host nucleus. Its function is as follows. Promotes alternative splicing of late transcripts by promoting splicing at weak 3' splice sites. Required for the temporal activation of major late pre-mRNA splicing at late times of infection. Induces the splicing and expression of the late capsid vertex protein. Functionally, probably functions as the small terminase that is part of the molecular motor that translocates genomic DNA in empty capsid during DNA packaging. This motor is located at a unique vertex and comprises at least the IVa2 ATPase, the small terminase 33K and probably a portal. Forms a ring-like structure of about 17 nm in which genomic DNA is translocated into the capsid. Stimulates IVa2 ATPase activity in the presence of the viral genome. Once the DNA is packaged, the terminase detaches: the 33K protein is present in the empty particles, but not in the mature virions. Also involved in virion assembly. The chain is Protein 33K from Human adenovirus F serotype 41 (HAdV-41).